A 309-amino-acid chain; its full sequence is ATP synthase gamma chain (309 aa).

The protein belongs to the ATPase gamma chain family. As to quaternary structure, F-type ATPases have 2 components, CF(1) - the catalytic core - and CF(0) - the membrane proton channel. CF(1) has five subunits: alpha(3), beta(3), gamma(1), delta(1), epsilon(1). CF(0) has three main subunits: a, b and c.

It localises to the cell membrane. Produces ATP from ADP in the presence of a proton gradient across the membrane. The gamma chain is believed to be important in regulating ATPase activity and the flow of protons through the CF(0) complex. The polypeptide is ATP synthase gamma chain (Mycolicibacterium vanbaalenii (strain DSM 7251 / JCM 13017 / BCRC 16820 / KCTC 9966 / NRRL B-24157 / PYR-1) (Mycobacterium vanbaalenii)).